The sequence spans 375 residues: Methylthioribose-1-phosphate isomerase (375 aa).

The active-site Proton donor is the aspartate 259.

It belongs to the eIF-2B alpha/beta/delta subunits family. MtnA subfamily.

The protein resides in the cytoplasm. It localises to the nucleus. The catalysed reaction is 5-(methylsulfanyl)-alpha-D-ribose 1-phosphate = 5-(methylsulfanyl)-D-ribulose 1-phosphate. Its pathway is amino-acid biosynthesis; L-methionine biosynthesis via salvage pathway; L-methionine from S-methyl-5-thio-alpha-D-ribose 1-phosphate: step 1/6. Its function is as follows. Catalyzes the interconversion of methylthioribose-1-phosphate (MTR-1-P) into methylthioribulose-1-phosphate (MTRu-1-P). This chain is Methylthioribose-1-phosphate isomerase, found in Populus trichocarpa (Western balsam poplar).